A 97-amino-acid chain; its full sequence is Small ribosomal subunit protein bS20 (97 aa).

This sequence belongs to the bacterial ribosomal protein bS20 family.

Functionally, binds directly to 16S ribosomal RNA. This is Small ribosomal subunit protein bS20 from Gloeothece citriformis (strain PCC 7424) (Cyanothece sp. (strain PCC 7424)).